A 213-amino-acid chain; its full sequence is MILRIPSLLYLFTLLTAVYAVKFDLTSDRNPKPKCIWNFASAHSLVIVTANVPGEPDQQVDIQILDGSERGNVYLSKKDVRGEARLAVTTHESADVGVCLTNRYTGSGNPRVVRSVELDVDIGADAIDYNAIANQESLSILEVEMRKLEAVTKEIVEEMGYLQRREMRMRDTNESTNQRVKVFSVLIICCTIGLGVWQLLHLRSFFKRKYLID.

Positions 1–20 (MILRIPSLLYLFTLLTAVYA) are cleaved as a signal peptide. The Lumenal portion of the chain corresponds to 21–181 (VKFDLTSDRN…TNESTNQRVK (161 aa)). The region spanning 33–122 (PKCIWNFASA…VRSVELDVDI (90 aa)) is the GOLD domain. Residues 182 to 202 (VFSVLIICCTIGLGVWQLLHL) form a helical membrane-spanning segment. The Cytoplasmic portion of the chain corresponds to 203–213 (RSFFKRKYLID).

Belongs to the EMP24/GP25L family.

It is found in the endoplasmic reticulum membrane. The protein localises to the golgi apparatus membrane. In terms of biological role, constituent of COPII-coated endoplasmic reticulum-derived transport vesicles. Required for efficient transport of a subset of secretory proteins to the Golgi. Facilitates retrograde transport from the Golgi to the endoplasmic reticulum. The protein is Endoplasmic reticulum vesicle protein 25 (ERV25) of Cryptococcus neoformans var. neoformans serotype D (strain JEC21 / ATCC MYA-565) (Filobasidiella neoformans).